Consider the following 65-residue polypeptide: Large ribosomal subunit protein bL35 (65 aa).

A disordered region spans residues 1 to 29 (MPKMKTNRGAAKRFKKTGSGRIKRGKAFT). Over residues 10 to 26 (AAKRFKKTGSGRIKRGK) the composition is skewed to basic residues.

It belongs to the bacterial ribosomal protein bL35 family.

The polypeptide is Large ribosomal subunit protein bL35 (Desulfotalea psychrophila (strain LSv54 / DSM 12343)).